The primary structure comprises 165 residues: DNA mimic protein DMP19 (165 aa).

The protein belongs to the DMP19-like protein family. In terms of assembly, monomer. Homodimer. The monomeric form of DMP19 interacts with the DNA-binding protein HU homodimer with 1:1 stoichiometry. The dimeric form of DMP19 interacts with the Neisseria hypothetical transcription factor (NHTF) dimer.

With respect to regulation, activity can be modulated in vitro by crown ethers, which are small cyclic polyethers that can modify protein surface behavior dramatically by stabilizing either intra- or intermolecular interactions, thereby probably altering the protein's tertiary and quaternary structure. Functionally, acts as a DNA mimic. Interacts with DNA-binding proteins and prevents their binding to DNA by occupying the DNA binding sites on the proteins, acting as a competitive inhibitor. DMP19 is a bifunctional DNA mimic protein involved in controlling nucleoid formation as well as gene regulation. This bifunctionality depends on different oligomeric states. The monomeric form interacts with the DNA-binding protein HU, which prevents HU from binding to DNA and forming nucleoids. The dimeric form interacts with the Neisseria hypothetical transcription factor (NHTF) and prevents NHTF from binding to its DNA-binding sites, thereby blocking its repressor activity and influencing expression of the target genes. DMP19 might use these different oligomerizations to regulate genes in two steps: the monomeric form may first release selected gene regions in chromosomal DNA by preventing HU from binding to DNA and forming nucleoids, then the dimeric form blocks the gene repressor activity of NHTF and ensures the continued expression of NHTF-controlled genes. The chain is DNA mimic protein DMP19 from Neisseria meningitidis serogroup B (strain ATCC BAA-335 / MC58).